Consider the following 898-residue polypeptide: Pyruvate, phosphate dikinase (898 aa).

An N-terminal region spans residues 1–355; sequence MAKWVYTFGA…LWMLQTRSGK (355 aa). Arg96 contacts ATP. The interval 356 to 412 is linker 1; the sequence is RTAKSALKIAVDMAEEGLISKEEAVARIDPASLDQLLHPTIDPHARRDIIGSGLPAS. Residues 413-511 form a central region; it reads PGAATGEIVF…TLRKGDVITI (99 aa). Thr466 carries the phosphothreonine; by PDRP1 modification. The Tele-phosphohistidine intermediate role is filled by His468. The tract at residues 512–546 is linker 2; it reads DGSSGQVLKGEIPMLQPELSGDFGKIMQWADASRR. Residues 547 to 898 are C-terminal; sequence MTVRTNAETP…VAEVQALAAS (352 aa). 7 residues coordinate substrate: Arg574, Arg630, Glu758, Gly779, Thr780, Asn781, and Asp782. Residue Glu758 participates in Mg(2+) binding. Asp782 is a Mg(2+) binding site. The Proton donor role is filled by Cys844.

Belongs to the PEP-utilizing enzyme family. As to quaternary structure, homodimer. It depends on Mg(2+) as a cofactor. Phosphorylation of Thr-466 in the dark inactivates the enzyme. Dephosphorylation upon light stimulation reactivates the enzyme.

The enzyme catalyses pyruvate + phosphate + ATP = phosphoenolpyruvate + AMP + diphosphate + H(+). With respect to regulation, activated by light-induced dephosphorylation. Inhibited by dark-induced phosphorylation. Both reactions are catalyzed by PDRP1. Its function is as follows. Catalyzes the reversible phosphorylation of pyruvate and phosphate. The polypeptide is Pyruvate, phosphate dikinase (ppdK) (Rhizobium meliloti (strain 1021) (Ensifer meliloti)).